A 790-amino-acid polypeptide reads, in one-letter code: Transient receptor potential cation channel subfamily V member 3 (790 aa).

At methionine 1–histidine 430 the chain is on the cytoplasmic side. Disordered regions lie at residues arginine 15–isoleucine 34, proline 52–asparagine 71, and isoleucine 76–glutamine 112. Over residues glutamate 95–alanine 105 the composition is skewed to polar residues. ANK repeat units follow at residues arginine 117–arginine 148, threonine 170–aspartate 198, glutamate 214–alanine 243, phenylalanine 261–serine 291, asparagine 298–asparagine 330, aspartate 340–serine 362, and threonine 398–leucine 420. The chain crosses the membrane as a helical span at residues methionine 431–tyrosine 460. The Extracellular portion of the chain corresponds to tyrosine 461 to methionine 479. The helical transmembrane segment at glycine 480–leucine 508 threads the bilayer. Topologically, residues arginine 509–aspartate 519 are cytoplasmic. A helical transmembrane segment spans residues alanine 520 to tyrosine 540. Residues leucine 541 to lysine 545 lie on the Extracellular side of the membrane. The helical transmembrane segment at glutamate 546–threonine 566 threads the bilayer. Residues arginine 567–phenylalanine 569 lie on the Cytoplasmic side of the membrane. The chain crosses the membrane as a helical span at residues glutamine 570–leucine 608. Residues isoleucine 609–serine 620 are Extracellular-facing. The pore-forming intramembrane region spans serine 621–glutamine 646. Glycine 638 contributes to the Na(+) binding site. The Extracellular segment spans residues asparagine 647–lysine 649. The chain crosses the membrane as a helical span at residues tyrosine 650–lysine 686. Over glutamate 687–valine 790 the chain is Cytoplasmic.

The protein belongs to the transient receptor (TC 1.A.4) family. TrpV subfamily. TRPV3 sub-subfamily. Homotetramer. May convert from a homotetramer to a homopentamer to allow pore dilation. Interacts with TRPV1; may form a heteromeric channel with TRPV1. Interacts with SNX11; this interaction promotes TRPV3 trafficking from the cell membrane to lysosome for degradation. Abundantly expressed in CNS. Widely expressed at low levels. Detected in dorsal root ganglion (at protein level). Expressed in the keratinocyte layers of the outer root sheath and, to lesser extent, to the matrix of the hair follicles (at protein level).

It is found in the cell membrane. The protein resides in the cytoplasm. The protein localises to the lysosome. The enzyme catalyses Ca(2+)(in) = Ca(2+)(out). The catalysed reaction is Mg(2+)(in) = Mg(2+)(out). It carries out the reaction Na(+)(in) = Na(+)(out). It catalyses the reaction K(+)(in) = K(+)(out). With respect to regulation, activated by cannabinoid that binds to the vanilloid binding pocket. Diphenylboronic anhydride induces pore dilation and enhances cation permeability by promoting the conversion to a homopentamer. Its function is as follows. Non-selective calcium permeant cation channel. It is activated by innocuous (warm) temperatures and shows an increased response at noxious temperatures greater than 39 degrees Celsius. Activation exhibits an outward rectification. The channel pore can dilate to provide permeability to larger cations. May associate with TRPV1 and may modulate its activity. Is a negative regulator of hair growth and cycling: TRPV3-coupled signaling suppresses keratinocyte proliferation in hair follicles and induces apoptosis and premature hair follicle regression (catagen). In Homo sapiens (Human), this protein is Transient receptor potential cation channel subfamily V member 3 (TRPV3).